The primary structure comprises 174 residues: NADPH-dependent 7-cyano-7-deazaguanine reductase (174 aa).

Cys72 acts as the Thioimide intermediate in catalysis. The active-site Proton donor is Asp79. Substrate-binding positions include 94 to 96 (VES) and 113 to 114 (HE).

The protein belongs to the GTP cyclohydrolase I family. QueF type 1 subfamily.

The protein resides in the cytoplasm. It catalyses the reaction 7-aminomethyl-7-carbaguanine + 2 NADP(+) = 7-cyano-7-deazaguanine + 2 NADPH + 3 H(+). It participates in tRNA modification; tRNA-queuosine biosynthesis. In terms of biological role, catalyzes the NADPH-dependent reduction of 7-cyano-7-deazaguanine (preQ0) to 7-aminomethyl-7-deazaguanine (preQ1). This is NADPH-dependent 7-cyano-7-deazaguanine reductase from Synechococcus elongatus (strain ATCC 33912 / PCC 7942 / FACHB-805) (Anacystis nidulans R2).